The chain runs to 355 residues: NAD-dependent protein deacylase sirtuin-6 (355 aa).

At S2 the chain carries N-acetylserine. Phosphoserine is present on S10. Positions 27–272 constitute a Deacetylase sirtuin-type domain; the sequence is PEELERKVWE…TQLMKHLGLE (246 aa). K33 carries the post-translational modification N6-acetyllysine. NAD(+) is bound by residues A53, T57, F64, R65, W71, Q113, and H133. The active-site Proton acceptor is H133. Residues C141, C144, and C166 each coordinate Zn(2+). K170 participates in a covalent cross-link: Glycyl lysine isopeptide (Lys-Gly) (interchain with G-Cter in ubiquitin). C177 is a binding site for Zn(2+). The NAD(+) site is built by G214, S216, N240, Q242, and V258. Residues 284-355 form a disordered region; it reads KALPPLPRPP…KRVKAEVTPS (72 aa). The segment covering 287–296 has biased composition (pro residues); that stretch reads PPLPRPPTPK. T294 is modified (phosphothreonine). Phosphoserine is present on residues S303 and S330.

Belongs to the sirtuin family. Class IV subfamily. As to quaternary structure, homodimer; binds to nucleosomes and DNA ends as a homodimer. Interacts with RELA; interferes with RELA binding to target DNA. Interacts with SMARCA5; promoting recruitment of SMARCA5/SNF2H to double-strand breaks (DSBs) sites. Interacts with the mTORC2 complex; preventing the ability of SIRT6 to deacetylate FOXO1. Interacts with the CLOCK-BMAL1 complex; recruited by the CLOCK-BMAL1 complex to regulate expression of clock-controlled genes. Interacts with CSNK2A2; preventing CSNK2A2 localization to the nucleus. In terms of processing, acetylated at Lys-33. Deacetylation at Lys-33 by SIRT1 promotes homomultimerization and binding to double-strand breaks (DSBs) sites. Phosphorylation at Ser-10 by MAPK8/JNK1 in response to oxidative stress stimulates the mono-ADP-ribosyltransferase activity on PARP1, leading to PARP1 recruitment to double-strand breaks (DSBs). Post-translationally, monoubiquitinated at Lys-170 by STUB1/CHIP, preventing its degradation by the proteasome. In terms of processing, sumoylated, leading to specifically decrease ability to deacetylate histone H3 at 'Lys-56' (H3K56ac).

It localises to the nucleus. The protein localises to the chromosome. It is found in the telomere. The protein resides in the endoplasmic reticulum. The catalysed reaction is N(6)-acetyl-L-lysyl-[protein] + NAD(+) + H2O = 2''-O-acetyl-ADP-D-ribose + nicotinamide + L-lysyl-[protein]. The enzyme catalyses N(6)-tetradecanoyl-L-lysyl-[protein] + NAD(+) + H2O = 2''-O-tetradecanoyl-ADP-D-ribose + nicotinamide + L-lysyl-[protein]. It catalyses the reaction N(6)-hexadecanoyl-L-lysyl-[protein] + NAD(+) + H2O = 2''-O-hexadecanoyl-ADP-D-ribose + nicotinamide + L-lysyl-[protein]. It carries out the reaction L-lysyl-[protein] + NAD(+) = N(6)-(ADP-D-ribosyl)-L-lysyl-[protein] + nicotinamide + H(+). The catalysed reaction is L-arginyl-[protein] + NAD(+) = N(omega)-(ADP-D-ribosyl)-L-arginyl-[protein] + nicotinamide + H(+). With respect to regulation, compared to the defatty-acylase activity, the protein deacetylase activity is weak in vitro, and requires activation. The histone deacetylase activity is strongly activated upon binding to nucleosomes and chromatin in vivo. Two molecules of SIRT6 associate with the acidic patch of one nucleosome, while the C-terminal disordered region of SIRT6 associates with nucleosomal DNA, leading to efficient histone deacetylation. The protein-lysine deacetylase activity is also activated by long-chain free fatty-acids. Its function is as follows. NAD-dependent protein deacetylase, deacylase and mono-ADP-ribosyltransferase that plays an essential role in DNA damage repair, telomere maintenance, metabolic homeostasis, inflammation, tumorigenesis and aging. Displays protein-lysine deacetylase or defatty-acylase (demyristoylase and depalmitoylase) activity, depending on the context. Acts as a key histone deacetylase by catalyzing deacetylation of histone H3 at 'Lys-9', 'Lys-18' and 'Lys-56' (H3K9ac, H3K18ac and H3K56ac, respectively), suppressing target gene expression of several transcription factors, including NF-kappa-B. Acts as an inhibitor of transcription elongation by mediating deacetylation of H3K9ac and H3K56ac, preventing release of NELFE from chromatin and causing transcriptional pausing. Involved in DNA repair by promoting double-strand break (DSB) repair: acts as a DSB sensor by recognizing and binding DSB sites, leading to (1) recruitment of DNA repair proteins, such as SMARCA5/SNF2H, and (2) deacetylation of histone H3K9ac and H3K56ac. SIRT6 participation to DSB repair is probably involved in extension of life span. Also promotes DNA repair by deacetylating non-histone proteins, such as DDB2 and p53/TP53. Specifically deacetylates H3K18ac at pericentric heterochromatin, thereby maintaining pericentric heterochromatin silencing at centromeres and protecting against genomic instability and cellular senescence. Involved in telomere maintenance by catalyzing deacetylation of histone H3 in telomeric chromatin, regulating telomere position effect and telomere movement in response to DNA damage. Required for embryonic stem cell differentiation by mediating histone deacetylation of H3K9ac. Plays a major role in metabolism by regulating processes such as glycolysis, gluconeogenesis, insulin secretion and lipid metabolism. Inhibits glycolysis via histone deacetylase activity and by acting as a corepressor of the transcription factor HIF1A, thereby controlling the expression of multiple glycolytic genes. Has tumor suppressor activity by repressing glycolysis, thereby inhibiting the Warburg effect. Also regulates glycolysis and tumorigenesis by mediating deacetylation and nuclear export of non-histone proteins, such as isoform M2 of PKM (PKM2). Acts as a negative regulator of gluconeogenesis by mediating deacetylation of non-histone proteins, such as FOXO1 and KAT2A/GCN5. Promotes beta-oxidation of fatty acids during fasting by catalyzing deacetylation of NCOA2, inducing coactivation of PPARA. Acts as a regulator of lipid catabolism in brown adipocytes, both by catalyzing deacetylation of histones and non-histone proteins, such as FOXO1. Also acts as a regulator of circadian rhythms, both by regulating expression of clock-controlled genes involved in lipid and carbohydrate metabolism, and by catalyzing deacetylation of PER2. The defatty-acylase activity is specifically involved in regulation of protein secretion. Has high activity toward long-chain fatty acyl groups and mediates protein-lysine demyristoylation and depalmitoylation of target proteins, such as RRAS2 and TNF, thereby regulating their secretion. Also acts as a mono-ADP-ribosyltransferase by mediating mono-ADP-ribosylation of PARP1, TRIM28/KAP1 or SMARCC2/BAF170. Mono-ADP-ribosyltransferase activity is involved in DNA repair, cellular senescence, repression of LINE-1 retrotransposon elements and regulation of transcription. The polypeptide is NAD-dependent protein deacylase sirtuin-6 (Castor canadensis (American beaver)).